A 157-amino-acid chain; its full sequence is Peptide methionine sulfoxide reductase MsrA (157 aa).

Residue C10 is part of the active site.

It belongs to the MsrA Met sulfoxide reductase family.

The enzyme catalyses L-methionyl-[protein] + [thioredoxin]-disulfide + H2O = L-methionyl-(S)-S-oxide-[protein] + [thioredoxin]-dithiol. The catalysed reaction is [thioredoxin]-disulfide + L-methionine + H2O = L-methionine (S)-S-oxide + [thioredoxin]-dithiol. Has an important function as a repair enzyme for proteins that have been inactivated by oxidation. Catalyzes the reversible oxidation-reduction of methionine sulfoxide in proteins to methionine. The chain is Peptide methionine sulfoxide reductase MsrA from Clostridium perfringens (strain 13 / Type A).